The primary structure comprises 250 residues: Small ribosomal subunit protein uS3 (250 aa).

One can recognise a KH type-2 domain in the interval Ile-39–Lys-111.

Belongs to the universal ribosomal protein uS3 family. As to quaternary structure, part of the 30S ribosomal subunit. Forms a tight complex with proteins S10 and S14.

In terms of biological role, binds the lower part of the 30S subunit head. Binds mRNA in the 70S ribosome, positioning it for translation. In Ziziphus jujuba witches'-broom phytoplasma, this protein is Small ribosomal subunit protein uS3.